We begin with the raw amino-acid sequence, 443 residues long: Endothelin receptor type B (443 aa).

The N-terminal stretch at 1 to 26 (MQPLRSLCGRALVALIFACGVAGVQS) is a signal peptide. Residues 27–102 (EERGFPPAGA…GPIEIKDTFK (76 aa)) are Extracellular-facing. Positions 53-89 (TFWPRGSNASLPRSSSPPQMPKGGRMAGPPARTLTPP) are disordered. Polar residues predominate over residues 59-69 (SNASLPRSSSP). The N-linked (GlcNAc...) asparagine glycan is linked to asparagine 60. Residues 103–127 (YINTVVSCLVFVLGIIGNSTLLRII) form a helical membrane-spanning segment. At 128 to 138 (YKNKCMRNGPN) the chain is on the cytoplasmic side. The chain crosses the membrane as a helical span at residues 139-164 (ILIASLALGDLLHIIIDIPINVYKLL). The Extracellular portion of the chain corresponds to 165-176 (AEDWPFGVEMCK). A disulfide bridge connects residues cysteine 175 and cysteine 256. The chain crosses the membrane as a helical span at residues 177 to 198 (LVPFIQKASVGITVLSLCALSI). Residues 199–219 (DRYRAVASWSRIKGIGVPKWT) are Cytoplasmic-facing. A helical transmembrane segment spans residues 220 to 244 (AVEIVLIWVVSVVLAVPEALGFDMI). The Extracellular portion of the chain corresponds to 245–272 (TTDYKGNRLRICLLHPTQKTAFMQFYKT). A helical transmembrane segment spans residues 273–297 (AKDWWLFSFYFCLPLAITAFFYTLM). Residues 298–325 (TCEMLRKKSGMQIALNDHLKQRREVAKT) are Cytoplasmic-facing. Serine 306 is subject to Phosphoserine. The chain crosses the membrane as a helical span at residues 326 to 351 (VFCLVLVFALCWLPLHLSRILKLTLY). Residues 352–363 (DQNDSNRCELLS) lie on the Extracellular side of the membrane. Residue asparagine 354 is glycosylated (N-linked (GlcNAc...) asparagine). A helical transmembrane segment spans residues 364–390 (FLLVLDYIGINMASLNSCINPIALYLV). Over 391 to 443 (SKRFKNCFKSCLCCWCQSFEEKQSLEEKQSCLKFKANDHGYDNFRSSNKYSSS) the chain is Cytoplasmic. Residues cysteine 403, cysteine 404, and cysteine 406 are each lipidated (S-palmitoyl cysteine). Serine 420 carries the post-translational modification Phosphoserine. Tyrosine 440 carries the post-translational modification Phosphotyrosine. Phosphoserine occurs at positions 441, 442, and 443.

It belongs to the G-protein coupled receptor 1 family. Endothelin receptor subfamily. EDNRB sub-subfamily.

It is found in the cell membrane. Non-specific receptor for endothelin 1, 2, and 3. Mediates its action by association with G proteins that activate a phosphatidylinositol-calcium second messenger system. This is Endothelin receptor type B (EDNRB) from Sus scrofa (Pig).